The chain runs to 176 residues: Translation initiation factor IF-3 (176 aa).

The protein belongs to the IF-3 family. As to quaternary structure, monomer.

The protein localises to the cytoplasm. Its function is as follows. IF-3 binds to the 30S ribosomal subunit and shifts the equilibrium between 70S ribosomes and their 50S and 30S subunits in favor of the free subunits, thus enhancing the availability of 30S subunits on which protein synthesis initiation begins. The sequence is that of Translation initiation factor IF-3 from Streptococcus mutans serotype c (strain ATCC 700610 / UA159).